The sequence spans 494 residues: GlcNAc-binding protein A (494 aa).

A signal peptide spans 1 to 21; it reads MKLNKIMLAMVVMSISGTAMA. Residues 22 to 192 form the Chitin-binding type-4 domain; that stretch reads HGYIENPPSR…TFYNMIDAEF (171 aa). One can recognise a Chitin-binding type-3 domain in the interval 435 to 484; the sequence is APAWSNKSSYQAKDTVTHNGRIYMSKWWADKASVPGDAAVTDTTGNGSGW. The disordered stretch occupies residues 474 to 494; it reads VTDTTGNGSGWGKVWEDKGAC.

It belongs to the GbpA family.

It is found in the secreted. In terms of biological role, probably interacts with GlcNAc residues. May promote attachment to both epithelial cell surfaces and chitin. This chain is GlcNAc-binding protein A, found in Yersinia enterocolitica serotype O:8 / biotype 1B (strain NCTC 13174 / 8081).